The sequence spans 225 residues: MVQSCSAYGCKNRYQKDRNISFHKFPLARPEVCVQWVSAMSRRNFKPTKYSNICSQHFTSDCFKQECNNRVLKDNAVPSLFTLQTQDPFSADVCFPLNVCATAEPLSECFPEQCGLPDGQEAGAVSCPEQCVPPGGQEAGAVSCDHNYTLEDCVQQKRRVQRLQEQMEKLRRRMKTLQQKCRRQERQLERLRANRGPAPLGDRYVILPRELYEELQGVETIGAVH.

A THAP-type zinc finger spans residues 5–57 (CSAYGCKNRYQKDRNISFHKFPLARPEVCVQWVSAMSRRNFKPTKYSNICSQH). The stretch at 149 to 196 (TLEDCVQQKRRVQRLQEQMEKLRRRMKTLQQKCRRQERQLERLRANRG) forms a coiled coil.

Belongs to the THAP1 family.

The protein resides in the nucleus. Its subcellular location is the nucleoplasm. DNA-binding transcription regulator that regulates endothelial cell proliferation and G1/S cell-cycle progression. Specifically binds the 5'-[AT]NTNN[GT]GGCA[AGT]-3' core DNA sequence and acts by modulating expression of pRB-E2F cell-cycle target genes. The polypeptide is THAP domain-containing protein 1 (thap1) (Danio rerio (Zebrafish)).